The sequence spans 74 residues: uncharacterized protein (74 aa).

A signal peptide spans 1 to 25 (MMMTDLPENIRKTAVALLRLGEATA).

This is an uncharacterized protein from Archaeoglobus fulgidus (strain ATCC 49558 / DSM 4304 / JCM 9628 / NBRC 100126 / VC-16).